Reading from the N-terminus, the 392-residue chain is Acetyl-CoA acetyltransferase (392 aa).

Cysteine 87 serves as the catalytic Acyl-thioester intermediate. Residues histidine 348 and cysteine 378 each act as proton acceptor in the active site.

The protein belongs to the thiolase-like superfamily. Thiolase family.

It localises to the cytoplasm. The catalysed reaction is 2 acetyl-CoA = acetoacetyl-CoA + CoA. The protein operates within metabolic intermediate biosynthesis; (R)-mevalonate biosynthesis; (R)-mevalonate from acetyl-CoA: step 1/3. Functionally, involved in the production of polyhydroxyalkonic acids (PHAs), composed primarily of 3-hydroxybutyric acid (3HB) and 3-hydroxyvaleric acid (3HV). The protein is Acetyl-CoA acetyltransferase (phaA) of Chromobacterium violaceum (strain ATCC 12472 / DSM 30191 / JCM 1249 / CCUG 213 / NBRC 12614 / NCIMB 9131 / NCTC 9757 / MK).